A 503-amino-acid polypeptide reads, in one-letter code: Probable cytosol aminopeptidase (503 aa).

The Mn(2+) site is built by Lys270 and Asp275. Lys282 is an active-site residue. The Mn(2+) site is built by Asp293, Asp352, and Glu354. Arg356 is an active-site residue.

It belongs to the peptidase M17 family. Requires Mn(2+) as cofactor.

It localises to the cytoplasm. It carries out the reaction Release of an N-terminal amino acid, Xaa-|-Yaa-, in which Xaa is preferably Leu, but may be other amino acids including Pro although not Arg or Lys, and Yaa may be Pro. Amino acid amides and methyl esters are also readily hydrolyzed, but rates on arylamides are exceedingly low.. It catalyses the reaction Release of an N-terminal amino acid, preferentially leucine, but not glutamic or aspartic acids.. Functionally, presumably involved in the processing and regular turnover of intracellular proteins. Catalyzes the removal of unsubstituted N-terminal amino acids from various peptides. This is Probable cytosol aminopeptidase from Serratia proteamaculans (strain 568).